A 118-amino-acid chain; its full sequence is MKSDKSNLEVRALAKHIRMSAHKARRVVNQIRGRSYEQALMILEFMPYRACYPILQLVSSAAANANHNLNLNRANLIISEAKVDEGPVLKRFQPRAQGRGYPIHKPTCHITITVKNKN.

This sequence belongs to the universal ribosomal protein uL22 family. As to quaternary structure, part of the 50S ribosomal subunit.

It is found in the plastid. The protein localises to the chloroplast. Its function is as follows. This protein binds specifically to 23S rRNA. In terms of biological role, the globular domain of the protein is located near the polypeptide exit tunnel on the outside of the subunit, while an extended beta-hairpin is found that lines the wall of the exit tunnel in the center of the 70S ribosome. The polypeptide is Large ribosomal subunit protein uL22c (rpl22) (Physcomitrium patens (Spreading-leaved earth moss)).